We begin with the raw amino-acid sequence, 148 residues long: Lysozyme C (148 aa).

Residues 1-18 (MKAPLLLGLLLLSVTVQG) form the signal peptide. The C-type lysozyme domain occupies 19 to 148 (KVFERCDLAR…VSQYVRNCGV (130 aa)). 4 disulfide bridges follow: Cys24–Cys146, Cys48–Cys134, Cys83–Cys99, and Cys95–Cys113. Catalysis depends on residues Glu53 and Asp71.

Belongs to the glycosyl hydrolase 22 family. In terms of assembly, monomer.

Its subcellular location is the secreted. It catalyses the reaction Hydrolysis of (1-&gt;4)-beta-linkages between N-acetylmuramic acid and N-acetyl-D-glucosamine residues in a peptidoglycan and between N-acetyl-D-glucosamine residues in chitodextrins.. Lysozymes have primarily a bacteriolytic function; those in tissues and body fluids are associated with the monocyte-macrophage system and enhance the activity of immunoagents. The protein is Lysozyme C (LYZ) of Leptonychotes weddellii (Weddell seal).